The primary structure comprises 400 residues: Elongation factor Tu (400 aa).

The region spanning 10–209 (KPHINIGTIG…AVDDYIPTPE (200 aa)) is the tr-type G domain. A G1 region spans residues 19–26 (GHVDHGKT). 19 to 26 (GHVDHGKT) serves as a coordination point for GTP. Thr26 is a Mg(2+) binding site. The G2 stretch occupies residues 60–64 (GITIS). The interval 81-84 (DCPG) is G3. Residues 81–85 (DCPGH) and 136–139 (NKVD) contribute to the GTP site. A G4 region spans residues 136–139 (NKVD). The G5 stretch occupies residues 174 to 176 (SAK).

The protein belongs to the TRAFAC class translation factor GTPase superfamily. Classic translation factor GTPase family. EF-Tu/EF-1A subfamily. Monomer.

The protein resides in the cytoplasm. It carries out the reaction GTP + H2O = GDP + phosphate + H(+). GTP hydrolase that promotes the GTP-dependent binding of aminoacyl-tRNA to the A-site of ribosomes during protein biosynthesis. The protein is Elongation factor Tu of Herpetosiphon aurantiacus (Herpetosiphon giganteus).